The chain runs to 299 residues: Palmitoyltransferase ZDHHC3 (299 aa).

Residues 1-47 lie on the Cytoplasmic side of the membrane; the sequence is MMLIPTHHFRNIERKPEYLQPEKCVPPPYPGPVGTMWFIRDGCGIAC. Residue tyrosine 18 is modified to Phosphotyrosine. The helical transmembrane segment at 48-68 threads the bilayer; the sequence is AIVTWFLVLYAEFVVLFVMLI. Over 69-72 the chain is Extracellular; the sequence is PSRD. The helical transmembrane segment at 73 to 93 threads the bilayer; that stretch reads YVYSIINGIVFNLLAFLALAS. Topologically, residues 94–171 are cytoplasmic; it reads HCRAMLTDPG…NCVGENNQKY (78 aa). Residues 127-177 form the DHHC domain; sequence YKCPKCCSIKPDRAHHCSVCKRCIRKMDHHCPWVNNCVGENNQKYFVLFTM. Cysteine 146 carries the S-palmitoyl cysteine lipid modification. The active-site S-palmitoyl cysteine intermediate is the cysteine 157. The helical transmembrane segment at 172–192 threads the bilayer; the sequence is FVLFTMYIALISLHALIMVGF. Residues 193–214 lie on the Extracellular side of the membrane; it reads HFLHCFEEDWTKCSSFSPPTTV. The helical transmembrane segment at 215–235 threads the bilayer; sequence ILLILLCFEGLLFLIFTSVMF. Topologically, residues 236-299 are cytoplasmic; the sequence is GTQVHSICTD…GKADPYQYVV (64 aa).

The protein belongs to the DHHC palmitoyltransferase family. Monomer. Homooligomers. The monomeric form has a higher catalytic activity. Forms heterooligomers with ZDHHC7. Interacts with TNFRSF10A. Autopalmitoylated. Post-translationally, phosphorylation by FGFR1 and SRC probably regulates the palmitoyltransferase activity. In terms of tissue distribution, widely expressed with significant expression in heart, lung, liver, skeletal muscle, kidney, testis, thymus, small intestine and leukocyte.

The protein localises to the golgi apparatus membrane. It catalyses the reaction L-cysteinyl-[protein] + hexadecanoyl-CoA = S-hexadecanoyl-L-cysteinyl-[protein] + CoA. The catalysed reaction is L-cysteinyl-[protein] + tetradecanoyl-CoA = S-tetradecanoyl-L-cysteinyl-[protein] + CoA. It carries out the reaction L-cysteinyl-[protein] + octadecanoyl-CoA = S-octadecanoyl-L-cysteinyl-[protein] + CoA. Golgi-localized palmitoyltransferase that catalyzes the addition of palmitate onto various protein substrates. Has no stringent fatty acid selectivity and in addition to palmitate can also transfer onto target proteins myristate from tetradecanoyl-CoA and stearate from octadecanoyl-CoA. Plays an important role in G protein-coupled receptor signaling pathways involving GNAQ and potentially other heterotrimeric G proteins by regulating their dynamic association with the plasma membrane. Palmitoylates ITGA6 and ITGB4, thereby regulating the alpha-6/beta-4 integrin localization, expression and function in cell adhesion to laminin. Plays a role in the TRAIL-activated apoptotic signaling pathway most probably through the palmitoylation and localization to the plasma membrane of TNFRSF10A. In the brain, by palmitoylating the gamma subunit GABRG2 of GABA(A) receptors and regulating their postsynaptic accumulation, plays a role in synaptic GABAergic inhibitory function and GABAergic innervation. Palmitoylates the neuronal protein GAP43 which is also involved in the formation of GABAergic synapses. Palmitoylates NCDN thereby regulating its association with endosome membranes. Probably palmitoylates PRCD and is involved in its proper localization within the photoreceptor. Could mediate the palmitoylation of NCAM1 and regulate neurite outgrowth. Could palmitoylate DNAJC5 and regulate its localization to Golgi membranes. Also constitutively palmitoylates DLG4. May also palmitoylate SNAP25. Could palmitoylate the glutamate receptors GRIA1 and GRIA2 but this has not been confirmed in vivo. Could also palmitoylate the D(2) dopamine receptor DRD2. May also palmitoylate LAMTOR1, promoting its localization to lysosomal membranes. Palmitoylates the Toll-like receptor 9/TLR9 in the Golgi and thereby regulates TLR9 trafficking to endosomes. May palmitoylate CALHM1 and CALHM3 subunits of gustatory voltage-gated ion channels and modulate channel gating and kinetics. In terms of biological role, may also function as a calcium transporter. In Homo sapiens (Human), this protein is Palmitoyltransferase ZDHHC3.